The sequence spans 80 residues: Probable antimicrobial peptide clone Con10 (80 aa).

The first 24 residues, 1 to 24 (MQYKTKTFLVIFLAYLVVTNEAEA), serve as a signal peptide directing secretion. The propeptide occupies 56–80 (EIEDFFDPYQRELDLELERLLSQLQ).

This sequence belongs to the non-disulfide-bridged peptide (NDBP) superfamily. Medium-length antimicrobial peptide (group 3) family. Expressed by the venom gland.

It localises to the secreted. Its subcellular location is the target cell membrane. Its function is as follows. Antimicrobial peptide. Has antifungal activity against all strains tested (MIC=12.5-200 uM). May act by disrupting the integrity of the bacterial cell membrane. In Opisthacanthus cayaporum (South American scorpion), this protein is Probable antimicrobial peptide clone Con10.